Reading from the N-terminus, the 65-residue chain is Large ribosomal subunit protein bL35 (65 aa).

This sequence belongs to the bacterial ribosomal protein bL35 family.

This chain is Large ribosomal subunit protein bL35, found in Rubrobacter xylanophilus (strain DSM 9941 / JCM 11954 / NBRC 16129 / PRD-1).